The chain runs to 685 residues: Linoleate 9/13-lipoxygenase (685 aa).

A signal peptide spans methionine 1 to alanine 19. The Lipoxygenase domain maps to alanine 122–isoleucine 685. Fe cation is bound by residues histidine 377, histidine 382, histidine 555, asparagine 559, and isoleucine 685.

Belongs to the lipoxygenase family. As to quaternary structure, monomer. It depends on Fe cation as a cofactor.

The protein localises to the periplasm. The enzyme catalyses (9Z,12Z)-octadecadienoate + O2 = (9S)-hydroperoxy-(10E,12Z)-octadecadienoate. It catalyses the reaction (9Z)-octadecenoate + O2 = (8E,10S)-10-hydroperoxy-octadeca-8-enoate. It carries out the reaction (9Z,12Z)-octadecadienoate + O2 = (8E,10S,12Z)-10-hydroperoxyoctadeca-8,12-dienoate. The catalysed reaction is (9Z,12Z,15Z)-octadecatrienoate + O2 = (8E,10S,12Z,15Z)-10-hydroperoxyoctadeca-8,12,15-trienoate. The enzyme catalyses (9Z,12Z)-octadecadienoate + O2 = (13S)-hydroperoxy-(9Z,11E)-octadecadienoate. It catalyses the reaction (9Z,12Z,15Z)-octadecatrienoate + O2 = (13S)-hydroperoxy-(9Z,11E,15Z)-octadecatrienoate. Inhibited by Ba(2+), Zn(2+) and Fe(3+). In terms of biological role, in presence of oxygen, converts linoleate into (9S)-hydroperoxy-10,12-octadecenoate (9HPOD), which spontaneously decomposes to the corresponding 9-hydroxy-10,12-octadecenoate (9HOD), and into 13-hydroperoxy-9,11-octadecenoate (13HPOD) which spontaneously decomposes to the corresponding 13-hydroxy-9,11-octadecenoate (13HOD). Also active on linolenate. To a lesser extent, is also able to convert oleate into (10S)-hydroperoxy-8E-octadecenoate, which spontaneously decomposes to the corresponding 10-hydroxy-8E-octadecenoate. Is almost not active on arachidonate. This chain is Linoleate 9/13-lipoxygenase (lox), found in Pseudomonas aeruginosa.